A 305-amino-acid polypeptide reads, in one-letter code: GS homeobox 2 (305 aa).

Disordered stretches follow at residues 115–151 (DAQF…AAAA) and 259–305 (KKEG…ISPL). Basic residues predominate over residues 123–140 (SHAHHHHHPPQHHHHHHQ). Over residues 141-151 (PQQPGSAAAAA) the composition is skewed to low complexity. The homeobox DNA-binding region spans 203–262 (GKRMRTAFTSTQLLELEREFSSNMYLSRLRRIEIATYLNLSEKQVKIWFQNRRVKHKKEG).

Belongs to the Antp homeobox family.

Its subcellular location is the nucleus. In terms of biological role, transcription factor that binds 5'-CNAATTAG-3' DNA sequence and regulates the expression of numerous genes including genes important for brain development. During telencephalic development, causes ventralization of pallial progenitors and, depending on the developmental stage, specifies different neuronal fates. At early stages, necessary and sufficient to correctly specify the ventral lateral ganglionic eminence (LGE) and its major derivatives, the striatal projection neurons. At later stages, may specify LGE progenitors toward dorsal LGE fates, including olfactory bulb interneurons. This is GS homeobox 2 (Gsx2) from Mus musculus (Mouse).